Reading from the N-terminus, the 518-residue chain is Protein nucleotidyltransferase YdiU (518 aa).

The span at 1–10 (MTHLHFDNRL) shows a compositional bias: basic and acidic residues. The segment at 1–25 (MTHLHFDNRLRQQLPGDPEEGARRR) is disordered. The ATP site is built by G100, G102, R103, K123, D135, G136, R193, and R200. The active-site Proton acceptor is D270. Mg(2+)-binding residues include N271 and D280. D280 contacts ATP.

It belongs to the SELO family. The cofactor is Mg(2+). Requires Mn(2+) as cofactor.

The catalysed reaction is L-seryl-[protein] + ATP = 3-O-(5'-adenylyl)-L-seryl-[protein] + diphosphate. It carries out the reaction L-threonyl-[protein] + ATP = 3-O-(5'-adenylyl)-L-threonyl-[protein] + diphosphate. The enzyme catalyses L-tyrosyl-[protein] + ATP = O-(5'-adenylyl)-L-tyrosyl-[protein] + diphosphate. It catalyses the reaction L-histidyl-[protein] + UTP = N(tele)-(5'-uridylyl)-L-histidyl-[protein] + diphosphate. The catalysed reaction is L-seryl-[protein] + UTP = O-(5'-uridylyl)-L-seryl-[protein] + diphosphate. It carries out the reaction L-tyrosyl-[protein] + UTP = O-(5'-uridylyl)-L-tyrosyl-[protein] + diphosphate. Nucleotidyltransferase involved in the post-translational modification of proteins. It can catalyze the addition of adenosine monophosphate (AMP) or uridine monophosphate (UMP) to a protein, resulting in modifications known as AMPylation and UMPylation. This Xanthomonas euvesicatoria pv. vesicatoria (strain 85-10) (Xanthomonas campestris pv. vesicatoria) protein is Protein nucleotidyltransferase YdiU.